A 395-amino-acid chain; its full sequence is MAESVAARVASLRRFLGSPSGGACVLLLASLAGFVLANSPWAAGYTALTTTPLTLSVLGKRGPDTIDAWVSDGFMTLFFLVVILEIKTEIVTGHLSSPRRVALPLIGALGGMIVPALTYLLVTCGHPEATRGWAIPVATDAAFTLPIILALGRHVSAGARAWLMALAIFDDVLGIVVIAVFYGNALYWPALAAAVVVTAALIGANRIGIRTVWGYATGCILLWIALLGSGLHPTLAGVITGLCLPATALGRNVGQATPLDRAASALTPVVTWVILPLFGFMNVGVSLRGIHPDMMVDAVPLGIMSGLLIGKPVGVFSATLLSTRLRIATLPAETSMGKVFGLSLLCGIGFTISLFIANLSFPDSGLVIPAKMGIFAGSVLSALAGWLWLRFSPEQ.

Helical transmembrane passes span 15–35, 66–86, 101–121, 132–152, 161–181, 184–204, 219–239, 265–285, 301–321, 339–359, and 366–386; these read FLGS…AGFV, IDAW…ILEI, VALP…TYLL, GWAI…LALG, AWLM…IAVF, NALY…LIGA, CILL…AGVI, ALTP…NVGV, LGIM…ATLL, VFGL…IANL, and LVIP…LAGW.

Belongs to the NhaA Na(+)/H(+) (TC 2.A.33) antiporter family.

The protein localises to the cell inner membrane. It catalyses the reaction Na(+)(in) + 2 H(+)(out) = Na(+)(out) + 2 H(+)(in). In terms of biological role, na(+)/H(+) antiporter that extrudes sodium in exchange for external protons. This is Na(+)/H(+) antiporter NhaA from Gluconacetobacter diazotrophicus (strain ATCC 49037 / DSM 5601 / CCUG 37298 / CIP 103539 / LMG 7603 / PAl5).